Reading from the N-terminus, the 317-residue chain is Gluconeogenesis factor (317 aa).

The protein belongs to the gluconeogenesis factor family.

The protein localises to the cytoplasm. Its function is as follows. Required for morphogenesis under gluconeogenic growth conditions. Required, in gluconeogenic growth conditions, for the correct localization of PBP1 and hence for displaying a normal rod shape. The chain is Gluconeogenesis factor (mgfK) from Bacillus subtilis (strain 168).